The chain runs to 323 residues: Fructose-1,6-bisphosphatase class 1 (323 aa).

Residues Glu-84, Asp-103, Leu-105, and Asp-106 each coordinate Mg(2+). Residues Asp-106–Ser-109, Asn-198, and Lys-264 contribute to the substrate site. A Mg(2+)-binding site is contributed by Glu-270.

This sequence belongs to the FBPase class 1 family. Homotetramer. Mg(2+) is required as a cofactor.

It localises to the cytoplasm. It catalyses the reaction beta-D-fructose 1,6-bisphosphate + H2O = beta-D-fructose 6-phosphate + phosphate. Its pathway is carbohydrate biosynthesis; gluconeogenesis. The protein is Fructose-1,6-bisphosphatase class 1 of Pseudoalteromonas atlantica (strain T6c / ATCC BAA-1087).